Consider the following 125-residue polypeptide: Small ribosomal subunit protein uS11 (125 aa).

Belongs to the universal ribosomal protein uS11 family. Part of the 30S ribosomal subunit. Interacts with proteins S7 and S18. Binds to IF-3.

In terms of biological role, located on the platform of the 30S subunit, it bridges several disparate RNA helices of the 16S rRNA. Forms part of the Shine-Dalgarno cleft in the 70S ribosome. This chain is Small ribosomal subunit protein uS11, found in Coprothermobacter proteolyticus (strain ATCC 35245 / DSM 5265 / OCM 4 / BT).